A 310-amino-acid polypeptide reads, in one-letter code: MTGPHPETESSGNRQISVAELLARQGVTGAPARRRRRRRGDSDAITVAELTGEIPIIRDDHHHAGPDAHASQSPAANGRVQVGEAAPQSPAEPVAEQVAEEPTRTVYWSQPEPRWPKSPPQDRRESGPELSEYPRPLRHTHSDRAPAGPPSGAEHMSPDPVEHYPDLWVDVLDTEVGEAEAETEVREAQPGRGERHAAAAAAGTDVEGDGAAEARVARRALDVVPTLWRGALVVLQSILAVAFGAGLFIAFDQLWRWNSIVALVLSVMVILGLVVSVRAVRKTEDIASTLIAVAVGALITLGPLALLQSG.

2 disordered regions span residues 22-163 and 178-209; these read LARQ…PVEH and EAEAETEVREAQPGRGERHAAAAAAGTDVEGD. Composition is skewed to basic and acidic residues over residues 56–66 and 183–197; these read IIRDDHHHAGP and TEVREAQPGRGERHA. The span at 198-209 shows a compositional bias: low complexity; that stretch reads AAAAAGTDVEGD. 3 helical membrane passes run 231–251, 257–277, and 286–306; these read ALVVLQSILAVAFGAGLFIAF, WNSIVALVLSVMVILGLVVSV, and IASTLIAVAVGALITLGPLAL.

The protein to M.leprae ML2433.

Its subcellular location is the cell membrane. This is an uncharacterized protein from Mycobacterium tuberculosis (strain CDC 1551 / Oshkosh).